The primary structure comprises 194 residues: ATP synthase subunit delta (194 aa).

The protein belongs to the ATPase delta chain family. F-type ATPases have 2 components, F(1) - the catalytic core - and F(0) - the membrane proton channel. F(1) has five subunits: alpha(3), beta(3), gamma(1), delta(1), epsilon(1). F(0) has three main subunits: a(1), b(2) and c(10-14). The alpha and beta chains form an alternating ring which encloses part of the gamma chain. F(1) is attached to F(0) by a central stalk formed by the gamma and epsilon chains, while a peripheral stalk is formed by the delta and b chains.

It is found in the cell inner membrane. In terms of biological role, f(1)F(0) ATP synthase produces ATP from ADP in the presence of a proton or sodium gradient. F-type ATPases consist of two structural domains, F(1) containing the extramembraneous catalytic core and F(0) containing the membrane proton channel, linked together by a central stalk and a peripheral stalk. During catalysis, ATP synthesis in the catalytic domain of F(1) is coupled via a rotary mechanism of the central stalk subunits to proton translocation. Functionally, this protein is part of the stalk that links CF(0) to CF(1). It either transmits conformational changes from CF(0) to CF(1) or is implicated in proton conduction. The polypeptide is ATP synthase subunit delta (Bartonella bacilliformis (strain ATCC 35685 / KC583 / Herrer 020/F12,63)).